The sequence spans 457 residues: Vasoactive intestinal polypeptide receptor 1 (457 aa).

The first 30 residues, 1–30, serve as a signal peptide directing secretion; sequence MRPPSPLPARWLCVLAGALAWALGPAGGQA. The Extracellular portion of the chain corresponds to 31-141; it reads ARLQEECDYV…DEQQTMFYGS (111 aa). 5 disulfide bridges follow: Cys37–Cys208, Cys50–Cys72, Cys63–Cys105, Cys86–Cys122, and Cys215–Cys285. N-linked (GlcNAc...) asparagine glycosylation is found at Asn58, Asn69, and Asn100. The helical transmembrane segment at 142–166 threads the bilayer; the sequence is VKTGYTIGYGLSLATLLVATAILSL. At 167-174 the chain is on the cytoplasmic side; the sequence is FRKLHCTR. A helical membrane pass occupies residues 175 to 196; sequence NYIHMHLFISFILRAAAVFIKD. Topologically, residues 197 to 216 are extracellular; that stretch reads LALFDSGESDQCSEGSVGCK. A helical transmembrane segment spans residues 217–241; it reads AAMVFFQYCVMANFFWLLVEGLYLY. Residues 242–254 are Cytoplasmic-facing; it reads TLLAVSFFSERKY. The chain crosses the membrane as a helical span at residues 255–276; sequence FWGYILIGWGVPSTFTMVWTIA. The Extracellular portion of the chain corresponds to 277–291; the sequence is RIHFEDYGCWDTINS. An N-linked (GlcNAc...) asparagine glycan is attached at Asn290. Residues 292–316 traverse the membrane as a helical segment; that stretch reads SLWWIIKGPILTSILVNFILFICII. Over 317–338 the chain is Cytoplasmic; sequence RILLQKLRPPDIRKSDSSPYSR. The chain crosses the membrane as a helical span at residues 339–359; sequence LARSTLLLIPLFGVHYIMFAF. At 360-367 the chain is on the extracellular side; that stretch reads FPDNFKPE. Residues 368 to 391 form a helical membrane-spanning segment; it reads VKMVFELVVGSFQGFVVAILYCFL. Residues 392–457 are Cytoplasmic-facing; that stretch reads NGEVQAELRR…SSFQAEVSLV (66 aa).

This sequence belongs to the G-protein coupled receptor 2 family. As to quaternary structure, interacts with ADCYAP1/PACAP; activated by both PACAP27 and PACAP38 neuropeptides. Interacts with VIP; the interaction results in VIPR1 activation. In lung, HT-29 colonic epithelial cells, Raji B-lymphoblasts. Lesser extent in brain, heart, kidney, liver and placenta. Not expressed in CD4+ or CD8+ T-cells. Expressed in the T-cell lines HARRIS, HuT 78, Jurkat and SUP-T1, but not in the T-cell lines Peer, MOLT-4, HSB and YT.

It localises to the cell membrane. In terms of biological role, g protein-coupled receptor activated by the neuropeptides vasoactive intestinal peptide (VIP) and pituitary adenylate cyclase-activating polypeptide (ADCYAP1/PACAP). Binds VIP and both PACAP27 and PACAP38 bioactive peptides with the following order of ligand affinity VIP = PACAP27 &gt; PACAP38. Ligand binding causes a conformation change that triggers signaling via guanine nucleotide-binding proteins (G proteins) and modulates the activity of downstream effectors. Activates cAMP-dependent pathway. This Homo sapiens (Human) protein is Vasoactive intestinal polypeptide receptor 1.